We begin with the raw amino-acid sequence, 144 residues long: Large ribosomal subunit protein uL16 (144 aa).

Belongs to the universal ribosomal protein uL16 family. As to quaternary structure, part of the 50S ribosomal subunit.

In terms of biological role, binds 23S rRNA and is also seen to make contacts with the A and possibly P site tRNAs. In Bacillus cereus (strain ATCC 10987 / NRS 248), this protein is Large ribosomal subunit protein uL16.